The sequence spans 1448 residues: Sister chromatid cohesion protein PDS5 homolog B-A (1448 aa).

One copy of the HEAT repeat lies at 383–419 (LLVNDQLLNFVRERTLDKRWRVRKEAMMGLAQIYKKY). The segment covering 1141–1155 (AGKQMLSKSSRMETV) has biased composition (polar residues). The tract at residues 1141-1448 (AGKQMLSKSS…TGRLRSAKKR (308 aa)) is disordered. Low complexity predominate over residues 1156-1168 (SNASSGSNPSSPG). Residues 1177-1186 (MELDQSENED) show a composition bias toward acidic residues. Composition is skewed to basic and acidic residues over residues 1196-1214 (KKSD…LEKP), 1233-1243 (ELSKPAQEPKS), and 1264-1273 (WQEKRLKEDL). The span at 1285–1294 (KKGRRGRPPK) shows a compositional bias: basic residues. Positions 1286 to 1298 (KGRRGRPPKSAKM) form a DNA-binding region, a.T hook 1. Residues 1324 to 1341 (PTDEDDHLEISEEQDFEN) are compositionally biased toward acidic residues. A compositionally biased stretch (basic residues) spans 1346–1356 (RKGRGSSRRTP). DNA-binding regions (a.T hook) lie at residues 1374 to 1386 (QKRR…TPTV) and 1390 to 1402 (KSHV…VVSK). Basic residues predominate over residues 1389 to 1399 (KKSHVGRPRKV).

It belongs to the PDS5 family. In terms of assembly, interacts with the cohesin complex. Phosphorylated in mitotic cells.

The protein localises to the nucleus. In terms of biological role, plays a role in androgen-induced proliferative arrest. Required for maintenance of sister chromatid cohesion during mitosis. This Xenopus laevis (African clawed frog) protein is Sister chromatid cohesion protein PDS5 homolog B-A (pds5b-a).